The chain runs to 471 residues: Ribulose bisphosphate carboxylase large chain 2 (471 aa).

The substrate site is built by Asn-116 and Thr-166. The active-site Proton acceptor is Lys-168. Lys-170 is a substrate binding site. Residues Lys-194, Asp-196, and Glu-197 each coordinate Mg(2+). An N6-carboxylysine modification is found at Lys-194. Catalysis depends on His-287, which acts as the Proton acceptor. Residues Arg-288, His-320, and Ser-372 each contribute to the substrate site.

The protein belongs to the RuBisCO large chain family. Type I subfamily. As to quaternary structure, heterohexadecamer of 8 large chains and 8 small chains. Requires Mg(2+) as cofactor.

Its subcellular location is the carboxysome. The enzyme catalyses 2 (2R)-3-phosphoglycerate + 2 H(+) = D-ribulose 1,5-bisphosphate + CO2 + H2O. It carries out the reaction D-ribulose 1,5-bisphosphate + O2 = 2-phosphoglycolate + (2R)-3-phosphoglycerate + 2 H(+). In terms of biological role, ruBisCO catalyzes two reactions: the carboxylation of D-ribulose 1,5-bisphosphate, the primary event in carbon dioxide fixation, as well as the oxidative fragmentation of the pentose substrate. Both reactions occur simultaneously and in competition at the same active site. In Hydrogenovibrio marinus, this protein is Ribulose bisphosphate carboxylase large chain 2.